A 311-amino-acid polypeptide reads, in one-letter code: Malate dehydrogenase (311 aa).

NAD(+) is bound by residues 7 to 13 and D34; that span reads GAAGGIG. 2 residues coordinate substrate: R81 and R87. Residues N94 and 117 to 119 contribute to the NAD(+) site; that span reads ITN. The substrate site is built by N119 and R153. The Proton acceptor role is filled by H177. Residue M227 coordinates NAD(+).

This sequence belongs to the LDH/MDH superfamily. MDH type 1 family. Homodimer.

It carries out the reaction (S)-malate + NAD(+) = oxaloacetate + NADH + H(+). Its function is as follows. Catalyzes the reversible oxidation of malate to oxaloacetate. In Pseudoalteromonas atlantica (strain T6c / ATCC BAA-1087), this protein is Malate dehydrogenase.